Reading from the N-terminus, the 225-residue chain is Cytidylate kinase (225 aa).

10–18 (GPASSGKST) is a binding site for ATP.

Belongs to the cytidylate kinase family. Type 1 subfamily.

The protein localises to the cytoplasm. The enzyme catalyses CMP + ATP = CDP + ADP. It carries out the reaction dCMP + ATP = dCDP + ADP. This chain is Cytidylate kinase, found in Streptococcus suis (strain 98HAH33).